The sequence spans 212 residues: Ribosomal RNA small subunit methyltransferase G (212 aa).

Residues Gly-80, Leu-85, 131–132 (AE), and Arg-146 each bind S-adenosyl-L-methionine.

Belongs to the methyltransferase superfamily. RNA methyltransferase RsmG family.

It localises to the cytoplasm. It carries out the reaction guanosine(527) in 16S rRNA + S-adenosyl-L-methionine = N(7)-methylguanosine(527) in 16S rRNA + S-adenosyl-L-homocysteine. Functionally, specifically methylates the N7 position of guanine in position 527 of 16S rRNA. The sequence is that of Ribosomal RNA small subunit methyltransferase G from Xanthomonas euvesicatoria pv. vesicatoria (strain 85-10) (Xanthomonas campestris pv. vesicatoria).